The following is a 142-amino-acid chain: Large ribosomal subunit protein uL11 (142 aa).

It belongs to the universal ribosomal protein uL11 family. As to quaternary structure, part of the ribosomal stalk of the 50S ribosomal subunit. Interacts with L10 and the large rRNA to form the base of the stalk. L10 forms an elongated spine to which L12 dimers bind in a sequential fashion forming a multimeric L10(L12)X complex. Post-translationally, one or more lysine residues are methylated.

In terms of biological role, forms part of the ribosomal stalk which helps the ribosome interact with GTP-bound translation factors. In Rhodopseudomonas palustris (strain BisB18), this protein is Large ribosomal subunit protein uL11.